Consider the following 299-residue polypeptide: Acetaldehyde dehydrogenase 6 (299 aa).

C125 serves as the catalytic Acyl-thioester intermediate. Residues 156 to 164 (GAGPGTRAN) and N275 each bind NAD(+).

It belongs to the acetaldehyde dehydrogenase family.

The enzyme catalyses acetaldehyde + NAD(+) + CoA = acetyl-CoA + NADH + H(+). This is Acetaldehyde dehydrogenase 6 (hpdG) from Rhodococcus jostii (strain RHA1).